A 426-amino-acid chain; its full sequence is UDP-N-acetylglucosamine 1-carboxyvinyltransferase (426 aa).

22 to 23 (KN) provides a ligand contact to phosphoenolpyruvate. Position 94 (Arg-94) interacts with UDP-N-acetyl-alpha-D-glucosamine. Cys-118 (proton donor) is an active-site residue. Cys-118 carries the post-translational modification 2-(S-cysteinyl)pyruvic acid O-phosphothioketal. UDP-N-acetyl-alpha-D-glucosamine is bound by residues 123-127 (RPVDL), Asp-310, and Ile-332.

This sequence belongs to the EPSP synthase family. MurA subfamily.

Its subcellular location is the cytoplasm. It catalyses the reaction phosphoenolpyruvate + UDP-N-acetyl-alpha-D-glucosamine = UDP-N-acetyl-3-O-(1-carboxyvinyl)-alpha-D-glucosamine + phosphate. It functions in the pathway cell wall biogenesis; peptidoglycan biosynthesis. Cell wall formation. Adds enolpyruvyl to UDP-N-acetylglucosamine. The chain is UDP-N-acetylglucosamine 1-carboxyvinyltransferase from Hyphomonas neptunium (strain ATCC 15444).